The sequence spans 626 residues: E3 ubiquitin-protein ligase HRD1 (626 aa).

The N-terminal stretch at 1–15 (MQLLLSSVCMALTSA) is a signal peptide. Over 16–38 (VIGFAYYQKQQFYPAVVYITKSN) the chain is Lumenal. A helical membrane pass occupies residues 39–59 (ASMGVIYIQFFVIVFMFGKLL). Topologically, residues 60–96 (SKIFLGTLRAAEFEHLLERFWYALTETCLAFTVFRDD) are cytoplasmic. A helical transmembrane segment spans residues 97-117 (FNPRFVALFTVLLFLKSFHWL). Residues 118–128 (AEERVDFMERS) lie on the Lumenal side of the membrane. Residues 129–149 (PVLGWLFHIRVGSLLTVLGIL) form a helical membrane-spanning segment. Topologically, residues 150–167 (DYVLLIHAYNSTLVRGPT) are cytoplasmic. A helical transmembrane segment spans residues 168–188 (VQLVFGFEYAILLTVIASTAI). Residues 189 to 222 (KYVLHAAEMRTDTPWENKAVFLLYTELVIGLIKV) are Lumenal-facing. The helical transmembrane segment at 223-243 (VLYILFVVIMAKIYALPMFVF) threads the bilayer. The interval 234–268 (KIYALPMFVFRPMFFTIRNFRKALNDVIMSRRAIR) is interaction with p53/TP53. Residues 244–626 (RPMFFTIRNF…AATNERTTAE (383 aa)) lie on the Cytoplasmic side of the membrane. An RING-type; atypical zinc finger spans residues 289 to 328 (CIICREDMVNHSKKLPCGHIFHTTCLRSWFQRQQTCPTCR). Positions 569–600 (DADEDDIPSTATEAVSIPNSDADFEENSSELG) are disordered. Residues 577–587 (STATEAVSIPN) show a composition bias toward polar residues.

This sequence belongs to the HRD1 family. In terms of assembly, homodimer. Interacts with p53. May interact with Septin2.

The protein resides in the endoplasmic reticulum membrane. The catalysed reaction is S-ubiquitinyl-[E2 ubiquitin-conjugating enzyme]-L-cysteine + [acceptor protein]-L-lysine = [E2 ubiquitin-conjugating enzyme]-L-cysteine + N(6)-ubiquitinyl-[acceptor protein]-L-lysine.. It functions in the pathway protein modification; protein ubiquitination. In terms of biological role, acts as an E3 ubiquitin-protein ligase which accepts ubiquitin specifically from endoplasmic reticulum-associated UBC7 E2 ligase and transfers it to substrates, promoting their degradation. Component of the endoplasmic reticulum quality control (ERQC) system also called ER-associated degradation (ERAD) involved in ubiquitin-dependent degradation of misfolded endoplasmic reticulum proteins. Also promotes the degradation of normal but naturally short-lived proteins. Protects cells from ER stress-induced apoptosis. Sequesters p53 in the cytoplasm and promotes its degradation, thereby negatively regulating its biological function in transcription, cell cycle regulation and apoptosis. This Drosophila melanogaster (Fruit fly) protein is E3 ubiquitin-protein ligase HRD1 (sip3).